A 445-amino-acid chain; its full sequence is tRNA(Ile)-lysidine synthase (445 aa).

33–38 (SGGLDS) provides a ligand contact to ATP.

The protein belongs to the tRNA(Ile)-lysidine synthase family.

The protein resides in the cytoplasm. It catalyses the reaction cytidine(34) in tRNA(Ile2) + L-lysine + ATP = lysidine(34) in tRNA(Ile2) + AMP + diphosphate + H(+). In terms of biological role, ligates lysine onto the cytidine present at position 34 of the AUA codon-specific tRNA(Ile) that contains the anticodon CAU, in an ATP-dependent manner. Cytidine is converted to lysidine, thus changing the amino acid specificity of the tRNA from methionine to isoleucine. This Pseudomonas syringae pv. tomato (strain ATCC BAA-871 / DC3000) protein is tRNA(Ile)-lysidine synthase.